The primary structure comprises 196 residues: Imidazoleglycerol-phosphate dehydratase (196 aa).

Belongs to the imidazoleglycerol-phosphate dehydratase family.

It is found in the cytoplasm. It carries out the reaction D-erythro-1-(imidazol-4-yl)glycerol 3-phosphate = 3-(imidazol-4-yl)-2-oxopropyl phosphate + H2O. Its pathway is amino-acid biosynthesis; L-histidine biosynthesis; L-histidine from 5-phospho-alpha-D-ribose 1-diphosphate: step 6/9. The chain is Imidazoleglycerol-phosphate dehydratase from Acidiphilium cryptum (strain JF-5).